The chain runs to 233 residues: Purine nucleoside phosphorylase DeoD-type (233 aa).

H4 provides a ligand contact to a purine D-ribonucleoside. Residues G20, R24, R43, and 87–90 (RVGT) each bind phosphate. A purine D-ribonucleoside-binding positions include 178 to 180 (EME) and 202 to 203 (SD). D203 serves as the catalytic Proton donor.

This sequence belongs to the PNP/UDP phosphorylase family. In terms of assembly, homohexamer; trimer of homodimers.

The catalysed reaction is a purine D-ribonucleoside + phosphate = a purine nucleobase + alpha-D-ribose 1-phosphate. It catalyses the reaction a purine 2'-deoxy-D-ribonucleoside + phosphate = a purine nucleobase + 2-deoxy-alpha-D-ribose 1-phosphate. Functionally, catalyzes the reversible phosphorolytic breakdown of the N-glycosidic bond in the beta-(deoxy)ribonucleoside molecules, with the formation of the corresponding free purine bases and pentose-1-phosphate. This chain is Purine nucleoside phosphorylase DeoD-type, found in Listeria innocua serovar 6a (strain ATCC BAA-680 / CLIP 11262).